A 298-amino-acid polypeptide reads, in one-letter code: tRNA-cytidine(32) 2-sulfurtransferase (298 aa).

Residues 48 to 53 (SGGKDS) carry the PP-loop motif motif. Positions 123, 126, and 214 each coordinate [4Fe-4S] cluster.

Belongs to the TtcA family. As to quaternary structure, homodimer. The cofactor is Mg(2+). [4Fe-4S] cluster is required as a cofactor.

The protein localises to the cytoplasm. The catalysed reaction is cytidine(32) in tRNA + S-sulfanyl-L-cysteinyl-[cysteine desulfurase] + AH2 + ATP = 2-thiocytidine(32) in tRNA + L-cysteinyl-[cysteine desulfurase] + A + AMP + diphosphate + H(+). The protein operates within tRNA modification. Its function is as follows. Catalyzes the ATP-dependent 2-thiolation of cytidine in position 32 of tRNA, to form 2-thiocytidine (s(2)C32). The sulfur atoms are provided by the cysteine/cysteine desulfurase (IscS) system. The protein is tRNA-cytidine(32) 2-sulfurtransferase of Nitrosospira multiformis (strain ATCC 25196 / NCIMB 11849 / C 71).